The following is a 245-amino-acid chain: tRNA pseudouridine synthase A 2 (245 aa).

The active-site Nucleophile is aspartate 53. Tyrosine 111 is a substrate binding site.

This sequence belongs to the tRNA pseudouridine synthase TruA family. Homodimer.

It carries out the reaction uridine(38/39/40) in tRNA = pseudouridine(38/39/40) in tRNA. Formation of pseudouridine at positions 38, 39 and 40 in the anticodon stem and loop of transfer RNAs. The chain is tRNA pseudouridine synthase A 2 from Bacillus cereus (strain ZK / E33L).